Consider the following 177-residue polypeptide: O-acetyl-ADP-ribose deacetylase (177 aa).

The Macro domain maps to 1–175 (MKTRIHVVQG…LYERLLTQQG (175 aa)). Substrate contacts are provided by residues 11–12 (DI), asparagine 25, 33–35 (GVD), and 122–126 (STGVY). Residue aspartate 35 is the Proton acceptor of the active site.

Belongs to the MacroD-type family. YmdB subfamily. As to quaternary structure, homodimer. Interacts with RNase III.

It catalyses the reaction 3''-O-acetyl-ADP-D-ribose + H2O = ADP-D-ribose + acetate + H(+). The enzyme catalyses 2''-O-acetyl-ADP-D-ribose + H2O = ADP-D-ribose + acetate + H(+). Its function is as follows. Deacetylates O-acetyl-ADP ribose to yield ADP-ribose and free acetate. Down-regulates ribonuclease 3 (RNase III) activity. Acts by interacting directly with the region of the ribonuclease that is required for dimerization/activation. This chain is O-acetyl-ADP-ribose deacetylase, found in Shigella flexneri serotype 5b (strain 8401).